The chain runs to 385 residues: Neuropeptide Y receptor type 2 (385 aa).

The Extracellular segment spans residues 1 to 54; sequence MGPLEAIGEENQTDEMKMELFTKLYLPRYTTPVSELALDPKPELKDSTTLVEVQ. Asparagine 11 is a glycosylation site (N-linked (GlcNAc...) asparagine). Residues 55-75 form a helical membrane-spanning segment; the sequence is IILIFAYCSIILLGVIGNSLV. Residues 76-90 are Cytoplasmic-facing; it reads IHVIIKFKSMRTVTN. The helical transmembrane segment at 91–111 threads the bilayer; the sequence is FFIANLAVADLLVNTLCLPFT. Topologically, residues 112–128 are extracellular; it reads LVYTLLGEWKLGPVLCH. Cysteine 127 and cysteine 207 are disulfide-bonded. A helical membrane pass occupies residues 129–149; it reads LVPYAQALAVHVSTVTLTVIA. Residues 150 to 169 lie on the Cytoplasmic side of the membrane; it reads LDRHRCIVYHLESKISKRIS. A helical transmembrane segment spans residues 170-190; sequence FLIIGVAWAVSALLASPLAIF. Over 191–221 the chain is Extracellular; it reads REYSLIEIIPDFKIVVCSEKWPGEGQLNYGT. A helical transmembrane segment spans residues 222–242; sequence IYSVSMLLIQYVLPLAIISYA. Residues 243-273 lie on the Cytoplasmic side of the membrane; that stretch reads YTRIWTKLKNHVSPGAGNDHYHHRRQKTTKM. The chain crosses the membrane as a helical span at residues 274–294; that stretch reads LVCVVVVFAVSWLPFHAFQLV. Over 295-308 the chain is Extracellular; the sequence is SDIDSQVLDLKEYK. The chain crosses the membrane as a helical span at residues 309–329; that stretch reads LIYTVFHVIAMCSTFANPLLY. At 330–385 the chain is on the cytoplasmic side; sequence GWMNNNYRTAFLTAFQCEQRLDSIHPEVSAAFKARKKLEAKKSQFPGDSFTQPTNV. Cysteine 346 carries S-palmitoyl cysteine lipidation.

It belongs to the G-protein coupled receptor 1 family.

It localises to the cell membrane. Its function is as follows. Receptor for neuropeptide Y and peptide YY. The chain is Neuropeptide Y receptor type 2 (NPY2R) from Gallus gallus (Chicken).